The following is a 215-amino-acid chain: Deoxyribose-phosphate aldolase (215 aa).

Aspartate 89 functions as the Proton donor/acceptor in the catalytic mechanism. Lysine 153 serves as the catalytic Schiff-base intermediate with acetaldehyde. Lysine 182 acts as the Proton donor/acceptor in catalysis.

Belongs to the DeoC/FbaB aldolase family. DeoC type 1 subfamily.

Its subcellular location is the cytoplasm. The enzyme catalyses 2-deoxy-D-ribose 5-phosphate = D-glyceraldehyde 3-phosphate + acetaldehyde. Its pathway is carbohydrate degradation; 2-deoxy-D-ribose 1-phosphate degradation; D-glyceraldehyde 3-phosphate and acetaldehyde from 2-deoxy-alpha-D-ribose 1-phosphate: step 2/2. In terms of biological role, catalyzes a reversible aldol reaction between acetaldehyde and D-glyceraldehyde 3-phosphate to generate 2-deoxy-D-ribose 5-phosphate. In Lactiplantibacillus plantarum (strain ATCC BAA-793 / NCIMB 8826 / WCFS1) (Lactobacillus plantarum), this protein is Deoxyribose-phosphate aldolase.